A 192-amino-acid chain; its full sequence is uncharacterized protein (192 aa).

The protein localises to the virion. This is an uncharacterized protein from Acanthamoeba polyphaga mimivirus (APMV).